We begin with the raw amino-acid sequence, 196 residues long: DnaA initiator-associating protein DiaA (196 aa).

Residues 34–196 enclose the SIS domain; the sequence is LVHSLLNGNK…DNTLFPHQDD (163 aa).

Belongs to the SIS family. DiaA subfamily. In terms of assembly, homotetramer; dimer of dimers.

Its function is as follows. Required for the timely initiation of chromosomal replication via direct interactions with the DnaA initiator protein. This Salmonella enteritidis PT4 (strain P125109) protein is DnaA initiator-associating protein DiaA.